The chain runs to 492 residues: NADH-quinone oxidoreductase subunit N (492 aa).

Transmembrane regions (helical) follow at residues leucine 12–isoleucine 32, isoleucine 44–isoleucine 64, leucine 76–alanine 96, leucine 115–leucine 135, phenylalanine 138–methionine 158, tyrosine 169–alanine 189, leucine 212–phenylalanine 232, proline 244–valine 264, leucine 272–leucine 292, leucine 306–glycine 326, serine 334–methionine 354, threonine 381–isoleucine 401, tryptophan 416–leucine 438, and isoleucine 463–isoleucine 483.

This sequence belongs to the complex I subunit 2 family. NDH-1 is composed of 14 different subunits. Subunits NuoA, H, J, K, L, M, N constitute the membrane sector of the complex.

Its subcellular location is the cell inner membrane. The enzyme catalyses a quinone + NADH + 5 H(+)(in) = a quinol + NAD(+) + 4 H(+)(out). NDH-1 shuttles electrons from NADH, via FMN and iron-sulfur (Fe-S) centers, to quinones in the respiratory chain. The immediate electron acceptor for the enzyme in this species is believed to be ubiquinone. Couples the redox reaction to proton translocation (for every two electrons transferred, four hydrogen ions are translocated across the cytoplasmic membrane), and thus conserves the redox energy in a proton gradient. This chain is NADH-quinone oxidoreductase subunit N, found in Psychrobacter arcticus (strain DSM 17307 / VKM B-2377 / 273-4).